Reading from the N-terminus, the 236-residue chain is Small ribosomal subunit protein uS5 (236 aa).

The 64-residue stretch at E61–I124 folds into the S5 DRBM domain.

This sequence belongs to the universal ribosomal protein uS5 family. As to quaternary structure, part of the 30S ribosomal subunit. Contacts protein S4.

Functionally, with S4 and S12 plays an important role in translational accuracy. This is Small ribosomal subunit protein uS5 from Pyrococcus abyssi (strain GE5 / Orsay).